Consider the following 391-residue polypeptide: 3-ketoacyl-CoA thiolase (391 aa).

C95 acts as the Acyl-thioester intermediate in catalysis. Active-site proton acceptor residues include H347 and C377.

This sequence belongs to the thiolase-like superfamily. Thiolase family. As to quaternary structure, heterotetramer of two alpha chains (FadB) and two beta chains (FadA).

The protein resides in the cytoplasm. The catalysed reaction is an acyl-CoA + acetyl-CoA = a 3-oxoacyl-CoA + CoA. It functions in the pathway lipid metabolism; fatty acid beta-oxidation. Functionally, catalyzes the final step of fatty acid oxidation in which acetyl-CoA is released and the CoA ester of a fatty acid two carbons shorter is formed. The chain is 3-ketoacyl-CoA thiolase from Marinobacter nauticus (strain ATCC 700491 / DSM 11845 / VT8) (Marinobacter aquaeolei).